A 657-amino-acid chain; its full sequence is Transketolase (657 aa).

H31 is a substrate binding site. Residues H71 and 120 to 122 (GPL) each bind thiamine diphosphate. D158 serves as a coordination point for Mg(2+). 2 residues coordinate thiamine diphosphate: G159 and N188. Residues N188 and I190 each contribute to the Mg(2+) site. Substrate is bound by residues H262, R354, and S381. H262 serves as a coordination point for thiamine diphosphate. The Proton donor role is filled by E408. F434 contributes to the thiamine diphosphate binding site. Residues H458, D466, and R517 each contribute to the substrate site.

It belongs to the transketolase family. As to quaternary structure, homodimer. It depends on Mg(2+) as a cofactor. The cofactor is Ca(2+). Requires Mn(2+) as cofactor. Co(2+) serves as cofactor. Thiamine diphosphate is required as a cofactor.

The enzyme catalyses D-sedoheptulose 7-phosphate + D-glyceraldehyde 3-phosphate = aldehydo-D-ribose 5-phosphate + D-xylulose 5-phosphate. It functions in the pathway carbohydrate biosynthesis; Calvin cycle. It participates in carbohydrate degradation; pentose phosphate pathway. Catalyzes the transfer of a two-carbon ketol group from a ketose donor to an aldose acceptor, via a covalent intermediate with the cofactor thiamine pyrophosphate. This chain is Transketolase (tklB), found in Cereibacter sphaeroides (Rhodobacter sphaeroides).